The primary structure comprises 254 residues: Mantle protein (254 aa).

Positions 1 to 16 (MLAVLLFAALVATAYS) are cleaved as a signal peptide.

Prismatic layer of shell (at protein level). Expressed primarily in the mantle with highest level in the outer epithelium of the mantle edge and lower level in the mantle pallium.

Its subcellular location is the secreted. This Margaritifera margaritifera (Freshwater pearl mussel) protein is Mantle protein.